A 168-amino-acid polypeptide reads, in one-letter code: mRNA stability protein IGO1 (168 aa).

Positions 1–13 are enriched in low complexity; it reads MSNENLSPNSSNP. The interval 1-31 is disordered; sequence MSNENLSPNSSNPDLTKLNNGESGTIDTSKF. The segment covering 17–31 has biased composition (polar residues); the sequence is KLNNGESGTIDTSKF. Serine 32 and serine 64 each carry phosphoserine. The interval 125–168 is disordered; that stretch reads KEGSISSGPPSSNNGTIGGGSTSSTPVGNHSSSSSSLYTESPIR. 2 stretches are compositionally biased toward low complexity: residues 127-139 and 146-168; these read GSIS…SNNG and TSST…SPIR.

The protein belongs to the endosulfine family. As to quaternary structure, interacts with RIM15, DHH1, PBP1, PBP4 and LSM12. Post-translationally, phosphorylated at Ser-64 by RIM15.

Its function is as follows. Required for TORC1 to properly control gene expression and chronological life span. Plays an essential role in initiation of the G0 program by preventing the degradation of specific nutrient-regulated mRNAs via the 5'-3' mRNA decay pathway. The polypeptide is mRNA stability protein IGO1 (IGO1) (Saccharomyces cerevisiae (strain ATCC 204508 / S288c) (Baker's yeast)).